A 175-amino-acid polypeptide reads, in one-letter code: Large ribosomal subunit protein eL14 (175 aa).

Residues 150–175 are disordered; that stretch reads KAAKMDSTEGAKRRMQKAIAARKAKK. Residues 152-161 show a composition bias toward basic and acidic residues; sequence AKMDSTEGAK. Residues 162–175 are compositionally biased toward basic residues; the sequence is RRMQKAIAARKAKK.

Belongs to the eukaryotic ribosomal protein eL14 family.

Its function is as follows. Component of the large ribosomal subunit. The ribosome is a large ribonucleoprotein complex responsible for the synthesis of proteins in the cell. This is Large ribosomal subunit protein eL14 (RPL14) from Leishmania donovani.